Reading from the N-terminus, the 261-residue chain is Carnitinyl-CoA dehydratase (261 aa).

The Nucleophile role is filled by Glu-111. Catalysis depends on Glu-131, which acts as the Proton acceptor.

The protein belongs to the enoyl-CoA hydratase/isomerase family.

It catalyses the reaction (R)-carnitinyl-CoA = crotonobetainyl-CoA + H2O. Its pathway is amine and polyamine metabolism; carnitine metabolism. Functionally, catalyzes the reversible dehydration of L-carnitinyl-CoA to crotonobetainyl-CoA. This is Carnitinyl-CoA dehydratase from Salmonella typhimurium (strain LT2 / SGSC1412 / ATCC 700720).